The primary structure comprises 1888 residues: Eukaryotic translation initiation factor 4G (1888 aa).

Disordered stretches follow at residues 1 to 259, 391 to 420, 449 to 662, 726 to 761, 838 to 903, 961 to 1042, 1083 to 1138, 1331 to 1356, 1462 to 1605, and 1639 to 1691; these read MSFN…PTTP, FDNK…TQPL, PLPS…SLQH, VAHS…KNSE, ADVS…DGEV, AYKR…SGDR, TNVS…DPRL, GERE…EREE, KWQQ…PGDL, and RFAG…PSLP. 2 stretches are compositionally biased toward polar residues: residues 13 to 36 and 75 to 84; these read GYTQ…SGTH and VNSTDSSNAP. A compositionally biased stretch (basic and acidic residues) spans 171-183; sequence DEQKRDQARHESF. Pro residues predominate over residues 185–195; that stretch reads PVPPMPIPLAP. Composition is skewed to polar residues over residues 211–231, 244–259, 393–405, and 458–475; these read NVGQ…NTGD, ASPN…PTTP, NKQS…TGTS, and NSQP…SQNV. Basic and acidic residues predominate over residues 497–506; the sequence is PNREHTRDTH. The segment covering 586-596 has biased composition (polar residues); sequence IKSSPVISKQF. Low complexity predominate over residues 603-630; it reads VSLESQDSSSVQSSLTASSEESELAVAH. Basic and acidic residues predominate over residues 631-645; the sequence is SEVRRENLLGSDLHK. Low complexity predominate over residues 840–850; that stretch reads VSASVSSSSTV. Over residues 869–885 the composition is skewed to polar residues; that stretch reads NMSSNEVLKNVVKSDQP. Positions 963–983 are enriched in basic and acidic residues; sequence KRPEEKKETVAHSESIERTES. An EIF4E-binding region spans residues 1048-1093; sequence KKYSRDFLLKFAEQFLDLPHNFEVTSDIESLMSTHTNVSHHHDRDP. The segment covering 1109–1124 has biased composition (basic and acidic residues); the sequence is RLDRRGSNLVDDDRWS. Residues 1239–1462 enclose the MIF4G domain; it reads QRQLKAILNK…KDAIDLRKNK (224 aa). 2 stretches are compositionally biased toward basic and acidic residues: residues 1467-1484 and 1661-1674; these read RKVE…DAAQ and KDLR…DRSR. In terms of domain architecture, MI spans 1700–1824; the sequence is RLQQLSLTAI…SLREVADLIC (125 aa).

This sequence belongs to the eukaryotic initiation factor 4G family. EIF4F is a multi-subunit complex, the composition of which varies with external and internal environmental conditions. It is composed of at least EIF4A, EIF4E and EIF4G. Interacts directly with eIF4E. In higher plants two isoforms of EIF4F have been identified, named isoform EIF4F and isoform EIF(iso)4F. Isoform EIF4F has subunits p220 and p26, whereas isoform EIF(iso)4F has subunits p82 and p28.

Its function is as follows. Component of the protein complex eIF4F, which is involved in the recognition of the mRNA cap, ATP-dependent unwinding of 5'-terminal secondary structure and recruitment of mRNA to the ribosome. In Cucumis melo (Muskmelon), this protein is Eukaryotic translation initiation factor 4G.